The primary structure comprises 82 residues: DNA-directed RNA polymerase subunit Rpo5 (82 aa).

The protein belongs to the archaeal Rpo5/eukaryotic RPB5 RNA polymerase subunit family. In terms of assembly, part of the RNA polymerase complex.

It localises to the cytoplasm. It catalyses the reaction RNA(n) + a ribonucleoside 5'-triphosphate = RNA(n+1) + diphosphate. In terms of biological role, DNA-dependent RNA polymerase (RNAP) catalyzes the transcription of DNA into RNA using the four ribonucleoside triphosphates as substrates. This is DNA-directed RNA polymerase subunit Rpo5 from Pyrococcus horikoshii (strain ATCC 700860 / DSM 12428 / JCM 9974 / NBRC 100139 / OT-3).